The sequence spans 258 residues: 3-deoxy-manno-octulosonate cytidylyltransferase (258 aa).

It belongs to the KdsB family.

It is found in the cytoplasm. It carries out the reaction 3-deoxy-alpha-D-manno-oct-2-ulosonate + CTP = CMP-3-deoxy-beta-D-manno-octulosonate + diphosphate. It participates in nucleotide-sugar biosynthesis; CMP-3-deoxy-D-manno-octulosonate biosynthesis; CMP-3-deoxy-D-manno-octulosonate from 3-deoxy-D-manno-octulosonate and CTP: step 1/1. It functions in the pathway bacterial outer membrane biogenesis; lipopolysaccharide biosynthesis. Its function is as follows. Activates KDO (a required 8-carbon sugar) for incorporation into bacterial lipopolysaccharide in Gram-negative bacteria. The polypeptide is 3-deoxy-manno-octulosonate cytidylyltransferase (Parvibaculum lavamentivorans (strain DS-1 / DSM 13023 / NCIMB 13966)).